Reading from the N-terminus, the 182-residue chain is Ribosome maturation factor RimM (182 aa).

In terms of domain architecture, PRC barrel spans 101 to 174; that stretch reads QDEYFIHQLY…QIVVRLLPGL (74 aa).

This sequence belongs to the RimM family. As to quaternary structure, binds ribosomal protein uS19.

The protein localises to the cytoplasm. In terms of biological role, an accessory protein needed during the final step in the assembly of 30S ribosomal subunit, possibly for assembly of the head region. Essential for efficient processing of 16S rRNA. May be needed both before and after RbfA during the maturation of 16S rRNA. It has affinity for free ribosomal 30S subunits but not for 70S ribosomes. In Roseiflexus sp. (strain RS-1), this protein is Ribosome maturation factor RimM.